The chain runs to 257 residues: Imidazole glycerol phosphate synthase subunit HisF (257 aa).

Catalysis depends on residues aspartate 11 and aspartate 130.

Belongs to the HisA/HisF family. In terms of assembly, heterodimer of HisH and HisF.

The protein localises to the cytoplasm. The catalysed reaction is 5-[(5-phospho-1-deoxy-D-ribulos-1-ylimino)methylamino]-1-(5-phospho-beta-D-ribosyl)imidazole-4-carboxamide + L-glutamine = D-erythro-1-(imidazol-4-yl)glycerol 3-phosphate + 5-amino-1-(5-phospho-beta-D-ribosyl)imidazole-4-carboxamide + L-glutamate + H(+). It functions in the pathway amino-acid biosynthesis; L-histidine biosynthesis; L-histidine from 5-phospho-alpha-D-ribose 1-diphosphate: step 5/9. In terms of biological role, IGPS catalyzes the conversion of PRFAR and glutamine to IGP, AICAR and glutamate. The HisF subunit catalyzes the cyclization activity that produces IGP and AICAR from PRFAR using the ammonia provided by the HisH subunit. This is Imidazole glycerol phosphate synthase subunit HisF from Afipia carboxidovorans (strain ATCC 49405 / DSM 1227 / KCTC 32145 / OM5) (Oligotropha carboxidovorans).